The primary structure comprises 359 residues: Uroporphyrinogen decarboxylase (359 aa).

Residues R28, A30, R32, D79, Y157, S212, and H335 each coordinate coproporphyrinogen III.

This sequence belongs to the uroporphyrinogen decarboxylase family. As to quaternary structure, monomer.

The protein localises to the nucleus. It is found in the cytoplasm. The enzyme catalyses uroporphyrinogen III + 4 H(+) = coproporphyrinogen III + 4 CO2. It carries out the reaction uroporphyrinogen I + 4 H(+) = coproporphyrinogen I + 4 CO2. It functions in the pathway porphyrin-containing compound metabolism; protoporphyrin-IX biosynthesis; coproporphyrinogen-III from 5-aminolevulinate: step 4/4. In terms of biological role, catalyzes the sequential decarboxylation of four acetate groups of uroporphyrinogen-III (octacarboxyporphyrin) to yield coproporphyrinogen-III (tetracarboxyporphyrin) with the formation of intermediate hepta-, hexa- and penta-carboxylate porphyrinogens in the heme biosynthesis pathway. Acts on a number of porphyrinogens, but only coproporphyrinogen III can ultimately be converted to heme. The polypeptide is Uroporphyrinogen decarboxylase (hem12) (Schizosaccharomyces pombe (strain 972 / ATCC 24843) (Fission yeast)).